The following is a 199-amino-acid chain: Ribonuclease HII (199 aa).

In terms of domain architecture, RNase H type-2 spans 10 to 199 (RIEAGCDEAG…LLPEQLTLGF (190 aa)). The a divalent metal cation site is built by Asp-16, Glu-17, and Asp-108.

This sequence belongs to the RNase HII family. It depends on Mn(2+) as a cofactor. The cofactor is Mg(2+).

Its subcellular location is the cytoplasm. The catalysed reaction is Endonucleolytic cleavage to 5'-phosphomonoester.. Functionally, endonuclease that specifically degrades the RNA of RNA-DNA hybrids. The polypeptide is Ribonuclease HII (Parabacteroides distasonis (strain ATCC 8503 / DSM 20701 / CIP 104284 / JCM 5825 / NCTC 11152)).